Consider the following 350-residue polypeptide: uncharacterized protein (350 aa).

Its function is as follows. May play a role in septum formation. This is an uncharacterized protein from Mycobacterium tuberculosis (strain CDC 1551 / Oshkosh).